The sequence spans 91 residues: Large ribosomal subunit protein bL27 (91 aa).

The tract at residues 1 to 22 is disordered; that stretch reads MAHKKAGGSSRNGRDSAGRRLG.

It belongs to the bacterial ribosomal protein bL27 family.

The sequence is that of Large ribosomal subunit protein bL27 from Methylocella silvestris (strain DSM 15510 / CIP 108128 / LMG 27833 / NCIMB 13906 / BL2).